The primary structure comprises 569 residues: Amyloid-beta A4 precursor protein-binding family A member 3 (569 aa).

N-acetylmethionine is present on Met-1. 2 disordered regions span residues 1–53 (MEFL…MELD) and 124–168 (AQSV…SSPE). Residues 19 to 32 (EEPKGPEVPSEDHP) are compositionally biased toward basic and acidic residues. Low complexity predominate over residues 132–141 (AQAAPRLLQP). Phosphoserine is present on residues Ser-166 and Ser-367. Residues 212–376 (DGVLFGAKYL…SASASHPHNG (165 aa)) form the PID domain. 2 PDZ domains span residues 389 to 475 (EVCI…IIHC) and 480 to 554 (TAVI…TMPA).

Binds to the cytoplasmic domain of amyloid protein (APP). Interacts with HIF1AN (via N-terminus). Interacts with NECAB3; seems to mediate the interaction between NECAB3 and HIF1AN. Ubiquitous.

The protein resides in the cytoplasm. It is found in the perinuclear region. Functionally, may modulate processing of the amyloid-beta precursor protein (APP) and hence formation of APP-beta. May enhance the activity of HIF1A in macrophages by inhibiting the activity of HIF1AN. The polypeptide is Amyloid-beta A4 precursor protein-binding family A member 3 (Apba3) (Rattus norvegicus (Rat)).